Reading from the N-terminus, the 301-residue chain is CPX chromosomal region candidate gene 1 protein (301 aa).

The segment at 1 to 77 is disordered; sequence MSYPTKEGSD…ENSELETEIQ (77 aa). Residues 44-60 are compositionally biased toward polar residues; the sequence is VETNPINREPGTATSQE.

As to expression, expressed in a variety of fetal tissues.

The chain is CPX chromosomal region candidate gene 1 protein (CPXCR1) from Homo sapiens (Human).